The primary structure comprises 132 residues: Ribosome-binding factor A (132 aa).

This sequence belongs to the RbfA family. In terms of assembly, monomer. Binds 30S ribosomal subunits, but not 50S ribosomal subunits or 70S ribosomes.

It localises to the cytoplasm. Its function is as follows. One of several proteins that assist in the late maturation steps of the functional core of the 30S ribosomal subunit. Associates with free 30S ribosomal subunits (but not with 30S subunits that are part of 70S ribosomes or polysomes). Required for efficient processing of 16S rRNA. May interact with the 5'-terminal helix region of 16S rRNA. In Pseudomonas entomophila (strain L48), this protein is Ribosome-binding factor A.